The following is a 542-amino-acid chain: Putative cysteine ligase BshC (542 aa).

A coiled-coil region spans residues 458–487 (VAKNAAILQAQIEFLQHALERALLRKHETE).

This sequence belongs to the BshC family.

Involved in bacillithiol (BSH) biosynthesis. May catalyze the last step of the pathway, the addition of cysteine to glucosamine malate (GlcN-Mal) to generate BSH. The polypeptide is Putative cysteine ligase BshC (Geobacillus kaustophilus (strain HTA426)).